A 736-amino-acid polypeptide reads, in one-letter code: MPRYKTVEQVLSLMKDRTRVRNIGIIAHVDHGKTTTSDTLLAASGIISPKVAGEALALDYLNVEQQRGITVKAANISLYHEAEGKGYVINLIDTPGHVDFSGRVTRSLRVLDGSIVVVDAVEGIMTQTETVLRQSLEERVRPILFINKVDRLVKELKLSPQEMLNRLLDIIRQVNNLIDMYGEPEFKEKWMINPQAGNVIFGSAKDKWGFSLPMAQKKGINMKNVIDAYTASDKSKLEELAAQAPINEALLDAAIKFVPNPIEAQKYRIPKIWKGDLDNELAKAMLNADPNGPIVFMITDMKVDPHAGLVATGRVFSGTLRSGEELWLVNAKTSQRILQVSLYMGPTRELAEEIPAGNIAAVLGLDRARSGETAISVGFSNVQGSFERLHYISEPVVTIAVEPKNPKDLTKMIDALRKLSIEDPNLVVKINEETGEYLLSGMGFLHLEVSLQLLRENYGIDVVTTPPIVVYRESIRAKSQVFEGKSPNKHNKFYLSVEPLNDKTIELISNGTIREDMDSKEMAKILRDEASWDYDEAKRIIAIDENVNVFVDLTSGVQHLREVMDTVLQGFRLAMKEGPLAHEPIRGVKVILHDAVIHEDPAHRGPAQIYPAVRNSIFAGFLTSRPTLLEPIQKLDIRVPADLIGNVTAVITRKRGKILDVSQIANMSRITAEIPVSESYDMASELRGSTGGRAFWGTEFSRWAPVPDSILLDVVTKIRERKGLPKELPKVEDFLS.

Residues 18-234 (TRVRNIGIIA…VIDAYTASDK (217 aa)) form the tr-type G domain. GTP contacts are provided by residues 27–34 (AHVDHGKT), 93–97 (DTPGH), and 147–150 (NKVD). His603 is modified (diphthamide).

It belongs to the TRAFAC class translation factor GTPase superfamily. Classic translation factor GTPase family. EF-G/EF-2 subfamily.

The protein localises to the cytoplasm. In terms of biological role, catalyzes the GTP-dependent ribosomal translocation step during translation elongation. During this step, the ribosome changes from the pre-translocational (PRE) to the post-translocational (POST) state as the newly formed A-site-bound peptidyl-tRNA and P-site-bound deacylated tRNA move to the P and E sites, respectively. Catalyzes the coordinated movement of the two tRNA molecules, the mRNA and conformational changes in the ribosome. This is Elongation factor 2 (fusA) from Saccharolobus solfataricus (strain ATCC 35092 / DSM 1617 / JCM 11322 / P2) (Sulfolobus solfataricus).